The primary structure comprises 421 residues: MVSESHHEALAAPPATTVAAAPPSNVTEPASPGGGGGKEDAFSKLKEKFMNELNKIPLPPWALIAIAIVAVLLILTCCFCLCKKCLFKKKNKKKGKEKGGKNAINMKDVKDLGKTMKDQDDDAETGLTDGEEKEEPKEVEKLGKIQYSLDYDFQNNQLLVGIIQAAELPALDMGGTSDPYVKVFLLPDKKKKYETKVHRKTLNPVFNEQFTFKVPYSELGGKTLVMAVYDFDRFSKHDIIGEYKVAMNTVDFGHVTEEWRDLQSAEKEEQEKLGDICFSLRYVPTAGKLTVVILEAKNLKKMDVGGLSDPYVKIHLMQNGKRLKKKKTTIKKNTLNPYYNESFSFEVPFEQIQKVQIVVTVLDYDKIGKNDAIGKVFVGYNSTGAELRHWSDMLANPRRPIAQWHTLQPEEEVDAMLAVKK.

A disordered region spans residues 1–40 (MVSESHHEALAAPPATTVAAAPPSNVTEPASPGGGGGKED). Residues 1–60 (MVSESHHEALAAPPATTVAAAPPSNVTEPASPGGGGGKEDAFSKLKEKFMNELNKIPLPP) lie on the Vesicular side of the membrane. Over residues 10 to 23 (LAAPPATTVAAAPP) the composition is skewed to low complexity. N-linked (GlcNAc...) asparagine glycosylation is present at asparagine 25. The helical transmembrane segment at 61-81 (WALIAIAIVAVLLILTCCFCL) threads the bilayer. S-palmitoyl cysteine attachment occurs at residues cysteine 77, cysteine 78, cysteine 80, cysteine 82, and cysteine 85. Over 82-421 (CKKCLFKKKN…EVDAMLAVKK (340 aa)) the chain is Cytoplasmic. The tract at residues 94–139 (KGKEKGGKNAINMKDVKDLGKTMKDQDDDAETGLTDGEEKEEPKEV) is disordered. Over residues 107–118 (KDVKDLGKTMKD) the composition is skewed to basic and acidic residues. Acidic residues predominate over residues 119 to 133 (QDDDAETGLTDGEEK). Residues 135-381 (EPKEVEKLGK…AIGKVFVGYN (247 aa)) form a phospholipid binding region. C2 domains follow at residues 141-260 (KLGK…EEWR) and 272-405 (KLGD…AQWH). 14 residues coordinate Ca(2+): leucine 171, aspartate 172, aspartate 178, aspartate 230, phenylalanine 231, aspartate 232, serine 235, lysine 236, aspartate 238, aspartate 303, aspartate 309, aspartate 363, aspartate 365, and aspartate 371.

Belongs to the synaptotagmin family. In terms of assembly, homotetramer. The cofactor is Ca(2+).

It localises to the cytoplasmic vesicle. The protein resides in the secretory vesicle membrane. Its subcellular location is the secretory vesicle. It is found in the synaptic vesicle membrane. The protein localises to the chromaffin granule membrane. It localises to the cytoplasm. In terms of biological role, calcium sensor that participates in triggering neurotransmitter release at the synapse. May have a regulatory role in the membrane interactions during trafficking of synaptic vesicles at the active zone of the synapse. It binds acidic phospholipids with a specificity that requires the presence of both an acidic head group and a diacyl backbone. May play a role in dendrite formation by melanocytes. May play a role in regulating the secretion of hormones relevant to the reproduction and egg-laying of female geese. The chain is Synaptotagmin-1 from Anser cygnoides (Swan goose).